The primary structure comprises 345 residues: S-adenosylmethionine:tRNA ribosyltransferase-isomerase (345 aa).

This sequence belongs to the QueA family. Monomer.

The protein localises to the cytoplasm. The enzyme catalyses 7-aminomethyl-7-carbaguanosine(34) in tRNA + S-adenosyl-L-methionine = epoxyqueuosine(34) in tRNA + adenine + L-methionine + 2 H(+). It participates in tRNA modification; tRNA-queuosine biosynthesis. Functionally, transfers and isomerizes the ribose moiety from AdoMet to the 7-aminomethyl group of 7-deazaguanine (preQ1-tRNA) to give epoxyqueuosine (oQ-tRNA). This is S-adenosylmethionine:tRNA ribosyltransferase-isomerase from Acidithiobacillus ferrooxidans (strain ATCC 53993 / BNL-5-31) (Leptospirillum ferrooxidans (ATCC 53993)).